Consider the following 698-residue polypeptide: DNA ligase (698 aa).

Residues 40-44 (DDVYD), 89-90 (SL), and Glu-123 each bind NAD(+). Lys-125 serves as the catalytic N6-AMP-lysine intermediate. Arg-146, Glu-184, Lys-300, and Lys-324 together coordinate NAD(+). The Zn(2+) site is built by Cys-417, Cys-420, Cys-435, and Cys-441. The 81-residue stretch at 618 to 698 (SSASPVAGKA…EWLALTGAAD (81 aa)) folds into the BRCT domain.

The protein belongs to the NAD-dependent DNA ligase family. LigA subfamily. It depends on Mg(2+) as a cofactor. The cofactor is Mn(2+).

The enzyme catalyses NAD(+) + (deoxyribonucleotide)n-3'-hydroxyl + 5'-phospho-(deoxyribonucleotide)m = (deoxyribonucleotide)n+m + AMP + beta-nicotinamide D-nucleotide.. Functionally, DNA ligase that catalyzes the formation of phosphodiester linkages between 5'-phosphoryl and 3'-hydroxyl groups in double-stranded DNA using NAD as a coenzyme and as the energy source for the reaction. It is essential for DNA replication and repair of damaged DNA. The chain is DNA ligase from Paramagnetospirillum magneticum (strain ATCC 700264 / AMB-1) (Magnetospirillum magneticum).